Consider the following 220-residue polypeptide: MPGLTLGDVVPDLELDTTHGKIRLHDFVGDAYVIIFSHPADFTPVCTTELSEMAGYAGEFDKRGVKLLGFSCDDVESHKDWIKDIEAYKPGRRVGFPIVADPDREAIRQLNMIDADEKDTAGGELPNRALHIVGPDKKVKLSFLFPACTGRNMAEVLRATDALLTAARHRVATPVNWKPGERVVIPPGVSDEEAKARFPAGFETAQLPSNKCYLRFTQVD.

The 162-residue stretch at 4–165 (LTLGDVVPDL…VLRATDALLT (162 aa)) folds into the Thioredoxin domain. Residue Cys-46 is the Cysteine sulfenic acid (-SOH) intermediate of the active site. Positions 195–218 (KARFPAGFETAQLPSNKCYLRFTQ) match the Bipartite nuclear localization signal motif.

This sequence belongs to the peroxiredoxin family. Prx6 subfamily.

The protein localises to the nucleus. It is found in the cytoplasm. The catalysed reaction is a hydroperoxide + [thioredoxin]-dithiol = an alcohol + [thioredoxin]-disulfide + H2O. Functionally, thiol-specific peroxidase that catalyzes the reduction of hydrogen peroxide and organic hydroperoxides to water and alcohols, respectively. Seems to contribute to the inhibition of germination during stress. The polypeptide is 1-Cys peroxiredoxin B (Oryza sativa subsp. japonica (Rice)).